The following is a 354-amino-acid chain: Probable tartrate dehydrogenase/decarboxylase (354 aa).

Positions 221, 245, and 249 each coordinate Mn(2+).

This sequence belongs to the isocitrate and isopropylmalate dehydrogenases family. The cofactor is Mg(2+). It depends on Mn(2+) as a cofactor. K(+) is required as a cofactor.

It catalyses the reaction tartrate + NAD(+) = 2-hydroxy-3-oxosuccinate + NADH + H(+). It carries out the reaction (2R,3S)-tartrate + NAD(+) = 2-hydroxy-3-oxosuccinate + NADH + H(+). The catalysed reaction is (2R,3R)-tartrate + NAD(+) = 2-hydroxy-3-oxosuccinate + NADH + H(+). The enzyme catalyses (2R,3R)-tartrate + H(+) = (R)-glycerate + CO2. It catalyses the reaction (R)-malate + NAD(+) = pyruvate + CO2 + NADH. Its function is as follows. Has multiple catalytic activities. Apart from catalyzing the oxidation of (+)-tartrate to oxaloglycolate, also converts meso-tartrate to D-glycerate and catalyzes the oxidative decarboxylation of D-malate to pyruvate. The chain is Probable tartrate dehydrogenase/decarboxylase (ycsA) from Bacillus subtilis (strain 168).